Reading from the N-terminus, the 158-residue chain is Transcription elongation factor GreA (158 aa).

The stretch at 45–72 forms a coiled coil; it reads AEYHAAREQQSFIEGRIKQLEGELSHAE.

Belongs to the GreA/GreB family.

Necessary for efficient RNA polymerase transcription elongation past template-encoded arresting sites. The arresting sites in DNA have the property of trapping a certain fraction of elongating RNA polymerases that pass through, resulting in locked ternary complexes. Cleavage of the nascent transcript by cleavage factors such as GreA or GreB allows the resumption of elongation from the new 3'terminus. GreA releases sequences of 2 to 3 nucleotides. This chain is Transcription elongation factor GreA, found in Xylella fastidiosa (strain M12).